A 107-amino-acid chain; its full sequence is Large ribosomal subunit protein uL18c (107 aa).

It belongs to the universal ribosomal protein uL18 family. As to quaternary structure, part of the 50S ribosomal subunit; contacts the 5S rRNA.

Its subcellular location is the plastid. The protein localises to the chloroplast. In terms of biological role, binds 5S rRNA, forms part of the central protuberance of the 50S subunit. This is Large ribosomal subunit protein uL18c (rpl18) from Guillardia theta (Cryptophyte).